The primary structure comprises 601 residues: Putative ankyrin repeat protein R841 (601 aa).

ANK repeat units follow at residues 17-50, 54-86, 91-123, 165-197, 201-234, 238-269, 274-310, 314-349, 361-390, 397-427, 432-463, and 467-500; these read NNIT…DVNA, HGKS…DVNH, QRSV…NINY, RENI…NIDH, YGQT…NINS, KGWS…EINS, NETM…SIDN, KGYT…NINS, VCCD…DVNS, TILM…NPNI, YHKF…DPNI, and IGNN…SYNC.

The sequence is that of Putative ankyrin repeat protein R841 from Acanthamoeba polyphaga mimivirus (APMV).